Here is a 516-residue protein sequence, read N- to C-terminus: Glycerol-3-phosphate dehydrogenase 1 (516 aa).

Residue 28 to 56 participates in FAD binding; sequence DVIVIGGGITGVGIALDAATRGLTVALVE.

Belongs to the FAD-dependent glycerol-3-phosphate dehydrogenase family. Requires FAD as cofactor.

The protein resides in the cytoplasm. It catalyses the reaction a quinone + sn-glycerol 3-phosphate = dihydroxyacetone phosphate + a quinol. The polypeptide is Glycerol-3-phosphate dehydrogenase 1 (glpD1) (Mycobacterium bovis (strain ATCC BAA-935 / AF2122/97)).